Consider the following 364-residue polypeptide: DNA replication and repair protein RecF (364 aa).

Residue 30 to 37 (GLNAQGKS) participates in ATP binding.

This sequence belongs to the RecF family.

It localises to the cytoplasm. Functionally, the RecF protein is involved in DNA metabolism; it is required for DNA replication and normal SOS inducibility. RecF binds preferentially to single-stranded, linear DNA. It also seems to bind ATP. In Caldanaerobacter subterraneus subsp. tengcongensis (strain DSM 15242 / JCM 11007 / NBRC 100824 / MB4) (Thermoanaerobacter tengcongensis), this protein is DNA replication and repair protein RecF.